Reading from the N-terminus, the 383-residue chain is MKNKLPPFIEIYRALIATPSISATEEALDQSNADLITLLADWFKNLGFNVEVQPVPGTRNKFNMLASTGQGAGGLLLAGHTDTVPFDDGRWTRDPFTLTEHDGKLYGLGTADMKGFFAFILDALRDVDVTKLKKPLYILATADEETSMAGARYFAETTALRPDCAIIGEPTSLQPVRAHKGHISNAIRIQGQSGHSSDPARGVNAIELMHDAIGHILQLRDSLKERYHYEAFTVPYPTLNLGHIHGGDASNRICACCELHMDIRPLPGMTLNELNGLLNDALAPVSERWPGRLTVDELHPPIPGYECPPNHQLVEVVEKLLGAKTEVVNYCTEAPFIQTLCPTLVLGPGSINQAHQPDEYLETRFIKPTRELITQVIHHFCWH.

His80 serves as a coordination point for Zn(2+). Residue Asp82 is part of the active site. Asp112 is a binding site for Zn(2+). Residue Glu144 is part of the active site. Zn(2+) is bound by residues Glu145, Glu169, and His355.

This sequence belongs to the peptidase M20A family. ArgE subfamily. As to quaternary structure, homodimer. It depends on Zn(2+) as a cofactor. Co(2+) is required as a cofactor. Requires glutathione as cofactor.

The protein localises to the cytoplasm. It carries out the reaction N(2)-acetyl-L-ornithine + H2O = L-ornithine + acetate. It participates in amino-acid biosynthesis; L-arginine biosynthesis; L-ornithine from N(2)-acetyl-L-ornithine (linear): step 1/1. In terms of biological role, catalyzes the hydrolysis of the amide bond of N(2)-acetylated L-amino acids. Cleaves the acetyl group from N-acetyl-L-ornithine to form L-ornithine, an intermediate in L-arginine biosynthesis pathway, and a branchpoint in the synthesis of polyamines. In Shigella dysenteriae serotype 1 (strain Sd197), this protein is Acetylornithine deacetylase.